Reading from the N-terminus, the 401-residue chain is MYELTPEQRTLQTQARELAQSVFASTAVQTDLTEQYPWDNVAQLRDAGFMGMMLPTSVGGRGLSTLDTVIVIEEMAKACATMGRITVDSNLGAIGAITKYGSEEQIKLAADLVLAGDKPAICISEPNAGSAASEMTTRADKNGDHYILNGEKYWITGGGVSKLHLIFARVFDDGVEQGIGAFITVLDDHGPEGLKVGRRLYAMGVRGIPETHLEFHDLKIHKSMMITFPDGLKRGFAALMSAYNAQRVGAGAVALGIAQCAFEEGVAYLKRREQFGRPLAEFQGLQWMVADMSVQLEAARLMLRSAAVSGETFPDINKAAQAKIFAAETANKVTNDALQFFGSSGYGRHNPMERHVRDARMFTIAGGTAQILRTQVASKILDMKLPQTRDGYLKAAQNSKR.

FAD contacts are provided by residues isoleucine 121–serine 124, serine 130, and tyrosine 153–threonine 156. A substrate-binding site is contributed by tyrosine 243–asparagine 244. FAD contacts are provided by residues arginine 272, glutamine 339, serine 343, glycine 366–glutamine 370, and glutamine 387.

Belongs to the acyl-CoA dehydrogenase family. In terms of assembly, homotetramer. It depends on FAD as a cofactor.

It carries out the reaction 3-sulfinopropanoyl-CoA + H2O = propanoyl-CoA + sulfite + H(+). Its function is as follows. Catalyzes the conversion 3-sulfinopropanoyl-CoA (3SP-CoA) to propanoyl-CoA by abstraction of sulfite. Does not show dehydrogenase activity. Involved in the degradation of 3,3'-dithiodipropionate (DTDP), a sulfur-containing precursor substrate for biosynthesis of polythioesters (PTEs). This is 3-sulfinopropanoyl-CoA desulfinase from Advenella mimigardefordensis (strain DSM 17166 / LMG 22922 / DPN7).